We begin with the raw amino-acid sequence, 629 residues long: tRNA uridine 5-carboxymethylaminomethyl modification enzyme MnmG (629 aa).

FAD contacts are provided by residues 13–18 (GGGHAG), Val125, and Ser180. 273–287 (GPRYCPSIEDKVMRF) lines the NAD(+) pocket. FAD is bound at residue Gln370.

It belongs to the MnmG family. As to quaternary structure, homodimer. Heterotetramer of two MnmE and two MnmG subunits. The cofactor is FAD.

It localises to the cytoplasm. Functionally, NAD-binding protein involved in the addition of a carboxymethylaminomethyl (cmnm) group at the wobble position (U34) of certain tRNAs, forming tRNA-cmnm(5)s(2)U34. This is tRNA uridine 5-carboxymethylaminomethyl modification enzyme MnmG from Salmonella paratyphi C (strain RKS4594).